Here is a 252-residue protein sequence, read N- to C-terminus: PHD finger protein ALFIN-LIKE 7 (252 aa).

The tract at residues Ala-141 to Glu-193 is disordered. Residues Ala-149–Gly-161 are compositionally biased toward low complexity. A Phosphoserine modification is found at Ser-176. Positions Glu-184–Glu-193 are enriched in acidic residues. The PHD-type zinc-finger motif lies at Gly-195 to Ser-247.

It belongs to the Alfin family. Interacts with H3K4me3 and to a lesser extent with H3K4me2. In terms of tissue distribution, ubiquitously expressed.

Its subcellular location is the nucleus. Functionally, histone-binding component that specifically recognizes H3 tails trimethylated on 'Lys-4' (H3K4me3), which mark transcription start sites of virtually all active genes. The protein is PHD finger protein ALFIN-LIKE 7 (AL7) of Arabidopsis thaliana (Mouse-ear cress).